A 138-amino-acid polypeptide reads, in one-letter code: Transcription antitermination protein NusB (138 aa).

This sequence belongs to the NusB family.

In terms of biological role, involved in transcription antitermination. Required for transcription of ribosomal RNA (rRNA) genes. Binds specifically to the boxA antiterminator sequence of the ribosomal RNA (rrn) operons. In Tolumonas auensis (strain DSM 9187 / NBRC 110442 / TA 4), this protein is Transcription antitermination protein NusB.